Reading from the N-terminus, the 534-residue chain is GTPase Obg (534 aa).

One can recognise an Obg domain in the interval 2 to 159 (ASFVDRVVLH…SDIVLELKSI (158 aa)). A disordered region spans residues 63–82 (APHRHASNGGQGMGDWRGGK). The segment covering 71 to 82 (GGQGMGDWRGGK) has biased composition (gly residues). The OBG-type G domain occupies 160–343 (ADIALVGFPS…LSFAMAELVT (184 aa)). Residues 166-173 (GFPSAGKS), 191-195 (FTTLI), 212-215 (DVPG), 295-298 (NKID), and 324-326 (SAS) contribute to the GTP site. Positions 173 and 193 each coordinate Mg(2+). One can recognise an OCT domain in the interval 363–449 (PRAVNRKEFT…ENAVVFDWEP (87 aa)). The disordered stretch occupies residues 456 to 534 (ELLSGPRGTD…AASTDDGDAL (79 aa)). Composition is skewed to basic and acidic residues over residues 464 to 504 (TDPR…ERKA) and 512 to 526 (SARR…REAA).

Belongs to the TRAFAC class OBG-HflX-like GTPase superfamily. OBG GTPase family. Monomer. Mg(2+) is required as a cofactor.

Its subcellular location is the cytoplasm. Its function is as follows. An essential GTPase which binds GTP, GDP and possibly (p)ppGpp with moderate affinity, with high nucleotide exchange rates and a fairly low GTP hydrolysis rate. Plays a role in control of the cell cycle, stress response, ribosome biogenesis and in those bacteria that undergo differentiation, in morphogenesis control. This Renibacterium salmoninarum (strain ATCC 33209 / DSM 20767 / JCM 11484 / NBRC 15589 / NCIMB 2235) protein is GTPase Obg.